The sequence spans 197 residues: Phosphoheptose isomerase (197 aa).

Positions 37–197 (MLQCLMNDGK…CIDSVLLEGM (161 aa)) constitute an SIS domain. Substrate is bound at residue 52–54 (NGG). Positions 61 and 65 each coordinate Zn(2+). Residues E65, 94-95 (ND), 120-122 (STS), S125, and Q175 each bind substrate. Residues Q175 and H183 each contribute to the Zn(2+) site.

The protein belongs to the SIS family. GmhA subfamily. In terms of assembly, homotetramer. Zn(2+) is required as a cofactor.

It is found in the cytoplasm. The catalysed reaction is 2 D-sedoheptulose 7-phosphate = D-glycero-alpha-D-manno-heptose 7-phosphate + D-glycero-beta-D-manno-heptose 7-phosphate. It participates in carbohydrate biosynthesis; D-glycero-D-manno-heptose 7-phosphate biosynthesis; D-glycero-alpha-D-manno-heptose 7-phosphate and D-glycero-beta-D-manno-heptose 7-phosphate from sedoheptulose 7-phosphate: step 1/1. Its function is as follows. Catalyzes the isomerization of sedoheptulose 7-phosphate in D-glycero-D-manno-heptose 7-phosphate. The sequence is that of Phosphoheptose isomerase from Neisseria gonorrhoeae (strain ATCC 700825 / FA 1090).